Reading from the N-terminus, the 375-residue chain is Chaperone protein DnaJ (375 aa).

In terms of domain architecture, J spans 5–70 (DFYETLGVAK…QKRAAYDRYG (66 aa)). Residues 136 to 214 (GKTAQIRVPT…CHGQGRVTEE (79 aa)) form a CR-type zinc finger. Zn(2+)-binding residues include C149, C152, C166, C169, C188, C191, C202, and C205. CXXCXGXG motif repeat units lie at residues 149–156 (CDVCSGSG), 166–173 (CGTCQGTG), 188–195 (CPTCHGRG), and 202–209 (CPKCHGQG).

This sequence belongs to the DnaJ family. In terms of assembly, homodimer. Requires Zn(2+) as cofactor.

It is found in the cytoplasm. Its function is as follows. Participates actively in the response to hyperosmotic and heat shock by preventing the aggregation of stress-denatured proteins and by disaggregating proteins, also in an autonomous, DnaK-independent fashion. Unfolded proteins bind initially to DnaJ; upon interaction with the DnaJ-bound protein, DnaK hydrolyzes its bound ATP, resulting in the formation of a stable complex. GrpE releases ADP from DnaK; ATP binding to DnaK triggers the release of the substrate protein, thus completing the reaction cycle. Several rounds of ATP-dependent interactions between DnaJ, DnaK and GrpE are required for fully efficient folding. Also involved, together with DnaK and GrpE, in the DNA replication of plasmids through activation of initiation proteins. This chain is Chaperone protein DnaJ, found in Rhizobium johnstonii (strain DSM 114642 / LMG 32736 / 3841) (Rhizobium leguminosarum bv. viciae).